The chain runs to 461 residues: Alkaline phosphatase 4 (461 aa).

The signal sequence occupies residues 1–41 (MKKMSLFQNMKSKLLPIAAVSVLTAGIFAGAELQQTEKASA). Residue Asp-58 participates in Mg(2+) binding. Asp-58 provides a ligand contact to Zn(2+). The active-site Phosphoserine intermediate is Ser-108. 2 residues coordinate Mg(2+): Thr-161 and Glu-282. Zn(2+) is bound by residues Asp-287, His-291, Asp-329, His-330, and His-423.

The protein belongs to the alkaline phosphatase family. As to quaternary structure, monomer. The cofactor is Mg(2+). Requires Zn(2+) as cofactor.

The enzyme catalyses a phosphate monoester + H2O = an alcohol + phosphate. In Bacillus subtilis (strain 168), this protein is Alkaline phosphatase 4 (phoA).